The chain runs to 320 residues: Biotin synthase (320 aa).

Positions 46-275 (NMGRRVDLCS…YAHIRYAGGR (230 aa)) constitute a Radical SAM core domain. C64, C68, and C71 together coordinate [4Fe-4S] cluster. The [2Fe-2S] cluster site is built by S108, C140, C200, and R270.

It belongs to the radical SAM superfamily. Biotin synthase family. As to quaternary structure, homodimer. [4Fe-4S] cluster serves as cofactor. The cofactor is [2Fe-2S] cluster.

It catalyses the reaction (4R,5S)-dethiobiotin + (sulfur carrier)-SH + 2 reduced [2Fe-2S]-[ferredoxin] + 2 S-adenosyl-L-methionine = (sulfur carrier)-H + biotin + 2 5'-deoxyadenosine + 2 L-methionine + 2 oxidized [2Fe-2S]-[ferredoxin]. It participates in cofactor biosynthesis; biotin biosynthesis; biotin from 7,8-diaminononanoate: step 2/2. Catalyzes the conversion of dethiobiotin (DTB) to biotin by the insertion of a sulfur atom into dethiobiotin via a radical-based mechanism. The sequence is that of Biotin synthase from Acetivibrio thermocellus (strain ATCC 27405 / DSM 1237 / JCM 9322 / NBRC 103400 / NCIMB 10682 / NRRL B-4536 / VPI 7372) (Clostridium thermocellum).